Here is a 514-residue protein sequence, read N- to C-terminus: Protein nucleotidyltransferase YdiU (514 aa).

Residues glycine 111, glycine 113, arginine 114, lysine 134, aspartate 146, glycine 147, arginine 197, and arginine 204 each contribute to the ATP site. Aspartate 276 (proton acceptor) is an active-site residue. Positions 277 and 286 each coordinate Mg(2+). Residue aspartate 286 participates in ATP binding.

The protein belongs to the SELO family. Mg(2+) serves as cofactor. The cofactor is Mn(2+).

The enzyme catalyses L-seryl-[protein] + ATP = 3-O-(5'-adenylyl)-L-seryl-[protein] + diphosphate. The catalysed reaction is L-threonyl-[protein] + ATP = 3-O-(5'-adenylyl)-L-threonyl-[protein] + diphosphate. It carries out the reaction L-tyrosyl-[protein] + ATP = O-(5'-adenylyl)-L-tyrosyl-[protein] + diphosphate. It catalyses the reaction L-histidyl-[protein] + UTP = N(tele)-(5'-uridylyl)-L-histidyl-[protein] + diphosphate. The enzyme catalyses L-seryl-[protein] + UTP = O-(5'-uridylyl)-L-seryl-[protein] + diphosphate. The catalysed reaction is L-tyrosyl-[protein] + UTP = O-(5'-uridylyl)-L-tyrosyl-[protein] + diphosphate. Nucleotidyltransferase involved in the post-translational modification of proteins. It can catalyze the addition of adenosine monophosphate (AMP) or uridine monophosphate (UMP) to a protein, resulting in modifications known as AMPylation and UMPylation. The polypeptide is Protein nucleotidyltransferase YdiU (Rhodococcus jostii (strain RHA1)).